A 264-amino-acid polypeptide reads, in one-letter code: Thymidylate synthase (264 aa).

Arg21 is a binding site for dUMP. Residue His51 participates in (6R)-5,10-methylene-5,6,7,8-tetrahydrofolate binding. 126–127 (RR) is a dUMP binding site. Cys146 (nucleophile) is an active-site residue. Residues 166-169 (RSAD), Asn177, and 207-209 (HIY) contribute to the dUMP site. Asp169 serves as a coordination point for (6R)-5,10-methylene-5,6,7,8-tetrahydrofolate. Ala263 lines the (6R)-5,10-methylene-5,6,7,8-tetrahydrofolate pocket.

The protein belongs to the thymidylate synthase family. Bacterial-type ThyA subfamily. Homodimer.

The protein resides in the cytoplasm. It carries out the reaction dUMP + (6R)-5,10-methylene-5,6,7,8-tetrahydrofolate = 7,8-dihydrofolate + dTMP. The protein operates within pyrimidine metabolism; dTTP biosynthesis. Its function is as follows. Catalyzes the reductive methylation of 2'-deoxyuridine-5'-monophosphate (dUMP) to 2'-deoxythymidine-5'-monophosphate (dTMP) while utilizing 5,10-methylenetetrahydrofolate (mTHF) as the methyl donor and reductant in the reaction, yielding dihydrofolate (DHF) as a by-product. This enzymatic reaction provides an intracellular de novo source of dTMP, an essential precursor for DNA biosynthesis. The protein is Thymidylate synthase of Ruminiclostridium cellulolyticum (strain ATCC 35319 / DSM 5812 / JCM 6584 / H10) (Clostridium cellulolyticum).